Consider the following 201-residue polypeptide: Probable quinol oxidase subunit 3 (201 aa).

5 helical membrane-spanning segments follow: residues 20 to 40 (LGFWIFLTAEFSLFGTLFATL), 62 to 82 (LVLIMTFALLISSYTCGISIY), 91 to 111 (LMMFWMILTVLLGLVFVGFEI), 133 to 153 (FFILLGTHGAHVSLGIGWIIC), and 172 to 192 (FIVSLYWHFLDVVWIFIFTAV).

Belongs to the cytochrome c oxidase subunit 3 family.

It localises to the cell membrane. The enzyme catalyses 2 a quinol + O2 = 2 a quinone + 2 H2O. Catalyzes quinol oxidation with the concomitant reduction of oxygen to water. The polypeptide is Probable quinol oxidase subunit 3 (qoxC) (Staphylococcus haemolyticus (strain JCSC1435)).